A 932-amino-acid chain; its full sequence is Beta-mannosidase A (932 aa).

The first 21 residues, Met1–Gly21, serve as a signal peptide directing secretion. Asn40, Asn248, Asn283, Asn317, and Asn348 each carry an N-linked (GlcNAc...) asparagine glycan. The Proton donor role is filled by Glu480. N-linked (GlcNAc...) asparagine glycans are attached at residues Asn538, Asn609, Asn632, Asn659, Asn739, Asn762, and Asn791.

This sequence belongs to the glycosyl hydrolase 2 family. Beta-mannosidase A subfamily. As to quaternary structure, homodimer.

Its subcellular location is the secreted. It carries out the reaction Hydrolysis of terminal, non-reducing beta-D-mannose residues in beta-D-mannosides.. It functions in the pathway glycan metabolism; N-glycan degradation. Exoglycosidase that cleaves the single beta-linked mannose residue from the non-reducing end of beta-mannosidic oligosaccharides of various complexity and length. Involved in the degradation of polymeric mannan and galactomannan. The polypeptide is Beta-mannosidase A (mndA) (Aspergillus clavatus (strain ATCC 1007 / CBS 513.65 / DSM 816 / NCTC 3887 / NRRL 1 / QM 1276 / 107)).